Reading from the N-terminus, the 170-residue chain is Large ribosomal subunit protein uL5 (170 aa).

This sequence belongs to the universal ribosomal protein uL5 family. In terms of assembly, part of the 50S ribosomal subunit; contacts the 5S rRNA and probably tRNA. Forms a bridge to the 30S subunit in the 70S ribosome.

This is one of the proteins that bind and probably mediate the attachment of the 5S RNA into the large ribosomal subunit, where it forms part of the central protuberance. In the 70S ribosome it contacts protein S13 of the 30S subunit (bridge B1b), connecting the 2 subunits; this bridge is implicated in subunit movement. May contact the P site tRNA; the 5S rRNA and some of its associated proteins might help stabilize positioning of ribosome-bound tRNAs. The polypeptide is Large ribosomal subunit protein uL5 (Methanobrevibacter smithii (strain ATCC 35061 / DSM 861 / OCM 144 / PS)).